A 59-amino-acid chain; its full sequence is Photosystem II reaction center protein K (59 aa).

The propeptide occupies 1–22 (MILYSHLSTLIDIDLSNNIFLA). Residues 30–50 (IFDPLVDVMPVIPVFFLLLAF) traverse the membrane as a helical segment.

Belongs to the PsbK family. In terms of assembly, PSII is composed of 1 copy each of membrane proteins PsbA, PsbB, PsbC, PsbD, PsbE, PsbF, PsbH, PsbI, PsbJ, PsbK, PsbL, PsbM, PsbT, PsbX, PsbY, PsbZ, Psb30/Ycf12, at least 3 peripheral proteins of the oxygen-evolving complex and a large number of cofactors. It forms dimeric complexes.

The protein resides in the plastid. Its subcellular location is the chloroplast thylakoid membrane. Its function is as follows. One of the components of the core complex of photosystem II (PSII). PSII is a light-driven water:plastoquinone oxidoreductase that uses light energy to abstract electrons from H(2)O, generating O(2) and a proton gradient subsequently used for ATP formation. It consists of a core antenna complex that captures photons, and an electron transfer chain that converts photonic excitation into a charge separation. The polypeptide is Photosystem II reaction center protein K (Chara vulgaris (Common stonewort)).